The chain runs to 145 residues: D-aminoacyl-tRNA deacylase (145 aa).

The Gly-cisPro motif, important for rejection of L-amino acids signature appears at G137–P138.

Belongs to the DTD family. As to quaternary structure, homodimer.

It localises to the cytoplasm. The enzyme catalyses glycyl-tRNA(Ala) + H2O = tRNA(Ala) + glycine + H(+). The catalysed reaction is a D-aminoacyl-tRNA + H2O = a tRNA + a D-alpha-amino acid + H(+). Functionally, an aminoacyl-tRNA editing enzyme that deacylates mischarged D-aminoacyl-tRNAs. Also deacylates mischarged glycyl-tRNA(Ala), protecting cells against glycine mischarging by AlaRS. Acts via tRNA-based rather than protein-based catalysis; rejects L-amino acids rather than detecting D-amino acids in the active site. By recycling D-aminoacyl-tRNA to D-amino acids and free tRNA molecules, this enzyme counteracts the toxicity associated with the formation of D-aminoacyl-tRNA entities in vivo and helps enforce protein L-homochirality. The protein is D-aminoacyl-tRNA deacylase of Enterobacter sp. (strain 638).